A 641-amino-acid chain; its full sequence is SUMO-activating enzyme subunit 2-A (641 aa).

ATP is bound by residues 24-29 (GAGGIG), aspartate 48, 56-59 (NLNR), lysine 72, 95-96 (SI), and 117-122 (DNNAAR). 2 residues coordinate Zn(2+): cysteine 158 and cysteine 161. The active-site Glycyl thioester intermediate is the cysteine 173. Zn(2+) is bound by residues cysteine 439 and cysteine 442. Residues 546–641 (GDVPEKGPQK…EEDDDIIALD (96 aa)) are disordered. Basic and acidic residues predominate over residues 548–561 (VPEKGPQKPPEESV). Residues 562–579 (KNITNGSDDGAQPSTSKA) are compositionally biased toward polar residues. Composition is skewed to acidic residues over residues 582–594 (QDDVLIVDSDEES) and 630–641 (PVEEDDDIIALD).

The protein belongs to the ubiquitin-activating E1 family. As to quaternary structure, heterodimer of sae1 and uba2/sae2. The heterodimer corresponds to the two domains that are encoded on a single polypeptide chain in ubiquitin-activating enzyme E1. Interacts with ube2i.

It localises to the nucleus. The protein operates within protein modification; protein sumoylation. Functionally, the heterodimer acts as an E1 ligase for sumo1, sumo2, and sumo3. It mediates ATP-dependent activation of sumo proteins followed by formation of a thioester bond between a sumo protein and a conserved active site cysteine residue on uba2/sae2. In Xenopus laevis (African clawed frog), this protein is SUMO-activating enzyme subunit 2-A (uba2-a).